A 537-amino-acid polypeptide reads, in one-letter code: Glutamate--tRNA ligase (537 aa).

The 'HIGH' region motif lies at 9-19 (PSPTGLQHIGG). Zn(2+) is bound by residues cysteine 125, cysteine 127, cysteine 152, and glutamate 154. Positions 270 to 274 (KLSKR) match the 'KMSKS' region motif. Lysine 273 provides a ligand contact to ATP.

This sequence belongs to the class-I aminoacyl-tRNA synthetase family. Glutamate--tRNA ligase type 1 subfamily. As to quaternary structure, monomer. It depends on Zn(2+) as a cofactor.

The protein resides in the cytoplasm. It catalyses the reaction tRNA(Glu) + L-glutamate + ATP = L-glutamyl-tRNA(Glu) + AMP + diphosphate. Catalyzes the attachment of glutamate to tRNA(Glu) in a two-step reaction: glutamate is first activated by ATP to form Glu-AMP and then transferred to the acceptor end of tRNA(Glu). The protein is Glutamate--tRNA ligase of Treponema pallidum (strain Nichols).